The sequence spans 464 residues: Phospho-cellobiase (464 aa).

The active-site Proton donor is Glu-172. Glu-361 (nucleophile) is an active-site residue.

It belongs to the glycosyl hydrolase 1 family.

This chain is Phospho-cellobiase (casB), found in Klebsiella oxytoca.